The primary structure comprises 539 residues: MDRIEIPVLVVGGGLTGLAAAVFLRQQGVDCLLVERHRSTTFLTRASGINARTMELLRNAGLEETVIDRSLHLIEGKRWRELGQPADRIPWVVLRARDLADIERAVIVEEPSLDVADVSPTRAQWCGQDKLEPILRDEAVRRGADIRFHTRLDSFAQDADGVDAVIVDRGTGARTAVRSRYLIAADGVRSTVRQALGVTGTGHGSLGKAMSVLFQADFEPVLHGRRFVITYMANPQAPGVLQTFDENRWIFGFFCDAYGGGDAAFDTGRCADIVRTSLGIPDIPLDVQLVQPWEMSHHVADSYRSGRVFLAGDAAHVHPPAGAFGANGGIQDAHNLAWKLASVLHGRASDALLDTYHQERHPVGTEIAEQAWTRHTYRLDGDDELGRRLVDTKVVAAGYRYTSSAVLGAAYPTAIPHELALTGLPGQRVPHVWLDHDGRRVSTVDLAVDGFVLLARADGTPWADAAARLAATTGIPLTAHVVGKTLTDPADALAAATGLGEAGALLLRPDGFVAWRSDTSADDPEAVLDGVLARILART.

Positions 15, 35, 128, and 152 each coordinate FAD. Y231 functions as the Proton acceptor in the catalytic mechanism. An FAD-binding site is contributed by D313.

This sequence belongs to the PheA/TfdB FAD monooxygenase family. FAD is required as a cofactor.

It carries out the reaction tetracenomycin B2 + 2 NADPH + 2 O2 + 2 H(+) = 8-demethyltetracenomycin C + 2 NADP(+) + H2O. The catalysed reaction is tetracenomycin A2 + 2 NADPH + 2 O2 + 2 H(+) = tetracenomycin C + 2 NADP(+) + H2O. The protein operates within antibiotic biosynthesis. Its function is as follows. Involved in the biosynthesis of elloramycin, an antitumor polyketide. In vivo, probably catalyzes the triple hydroxylation of 8-demethyltetracenomycin A2 (tetracenomycin B2) at positions C-4, C-4a and C-12a to give 8-demethyltetracenomycin C (8-DMTC). In vitro, catalyzes the triple hydroxylation of tetracenomycin A2 (TCM A2) to give tetracenomycin C (TCM C). Uses NADPH as an electron donor and requires molecular O(2). The sequence is that of Tetracenomycin B2 monooxygenase-dioxygenase from Streptomyces olivaceus.